Consider the following 1376-residue polypeptide: DNA-directed RNA polymerase subunit beta (1376 aa).

A compositionally biased stretch (polar residues) spans Asn-1357–Thr-1368. The disordered stretch occupies residues Asn-1357–Glu-1376.

Belongs to the RNA polymerase beta chain family. As to quaternary structure, the RNAP catalytic core consists of 2 alpha, 1 beta, 1 beta' and 1 omega subunit. When a sigma factor is associated with the core the holoenzyme is formed, which can initiate transcription.

It catalyses the reaction RNA(n) + a ribonucleoside 5'-triphosphate = RNA(n+1) + diphosphate. Its function is as follows. DNA-dependent RNA polymerase catalyzes the transcription of DNA into RNA using the four ribonucleoside triphosphates as substrates. The protein is DNA-directed RNA polymerase subunit beta of Azorhizobium caulinodans (strain ATCC 43989 / DSM 5975 / JCM 20966 / LMG 6465 / NBRC 14845 / NCIMB 13405 / ORS 571).